Here is a 1097-residue protein sequence, read N- to C-terminus: DNA-directed RNA polymerase subunit beta (1097 aa).

A disordered region spans residues Gln-1072 to Asp-1097.

The protein belongs to the RNA polymerase beta chain family. In cyanobacteria the RNAP catalytic core is composed of 2 alpha, 1 beta, 1 beta', 1 gamma and 1 omega subunit. When a sigma factor is associated with the core the holoenzyme is formed, which can initiate transcription.

The enzyme catalyses RNA(n) + a ribonucleoside 5'-triphosphate = RNA(n+1) + diphosphate. Functionally, DNA-dependent RNA polymerase catalyzes the transcription of DNA into RNA using the four ribonucleoside triphosphates as substrates. This Prochlorococcus marinus (strain MIT 9303) protein is DNA-directed RNA polymerase subunit beta.